An 84-amino-acid chain; its full sequence is ATP synthase subunit c (84 aa).

Helical transmembrane passes span 9–29 (IIGASILLAFAALGTAIGFAI) and 54–74 (IVAGLLDAIAMIAVGISLLFI).

Belongs to the ATPase C chain family. F-type ATPases have 2 components, F(1) - the catalytic core - and F(0) - the membrane proton channel. F(1) has five subunits: alpha(3), beta(3), gamma(1), delta(1), epsilon(1). F(0) has three main subunits: a(1), b(2) and c(10-14). The alpha and beta chains form an alternating ring which encloses part of the gamma chain. F(1) is attached to F(0) by a central stalk formed by the gamma and epsilon chains, while a peripheral stalk is formed by the delta and b chains.

It localises to the cell inner membrane. F(1)F(0) ATP synthase produces ATP from ADP in the presence of a proton or sodium gradient. F-type ATPases consist of two structural domains, F(1) containing the extramembraneous catalytic core and F(0) containing the membrane proton channel, linked together by a central stalk and a peripheral stalk. During catalysis, ATP synthesis in the catalytic domain of F(1) is coupled via a rotary mechanism of the central stalk subunits to proton translocation. In terms of biological role, key component of the F(0) channel; it plays a direct role in translocation across the membrane. A homomeric c-ring of between 10-14 subunits forms the central stalk rotor element with the F(1) delta and epsilon subunits. The protein is ATP synthase subunit c of Haemophilus influenzae (strain ATCC 51907 / DSM 11121 / KW20 / Rd).